A 348-amino-acid chain; its full sequence is DnaJ homolog subfamily B member 5 (348 aa).

The region spanning 4–68 (DYYKILGIPS…KKRSLYDQYG (65 aa)) is the J domain.

This Mus musculus (Mouse) protein is DnaJ homolog subfamily B member 5 (Dnajb5).